The sequence spans 224 residues: UPF0758 protein Tola_0183 (224 aa).

One can recognise an MPN domain in the interval 102–224 (SLTSPQLVRR…PVSFAERGWL (123 aa)). Residues His-173, His-175, and Asp-186 each contribute to the Zn(2+) site. The JAMM motif signature appears at 173-186 (HNHPSGVAEPSHAD).

This sequence belongs to the UPF0758 family.

The chain is UPF0758 protein Tola_0183 from Tolumonas auensis (strain DSM 9187 / NBRC 110442 / TA 4).